We begin with the raw amino-acid sequence, 1612 residues long: MAKSSLAGSDGALTWVNNATKKEELETANKNDSTKKLSVERVYQKKTQLEHILLRPDTYIGSVEPLTQLMWVYDEDVGMNCREVTFVPGLYKIFDEILVNAADNKQRDKNMTCIKVSIDPESNIISIWNNGKGIPVVEHKVEKVYVPALIFGQLLTSSNYDDDEKKVTGGRNGYGAKLCNIFSTKFTVETACKEYKHSFKQTWMNNMMKTSEAKIKHFDGEDYTCITFQPDLSKFKMEKLDKDIVALMTRRAYDLAGSCKGVKVMFNGKKLPVNGFRSYVDLYVKDKLDETGVALKVIHELANERWDVCLTLSEKGFQQISFVNSIATTKGGRHVDYVVDQVVSKLIEVVKKKNKAGVSVKPFQVKNHIWVFINCLIENPTFDSQTKENMTLQPKSFGSKCQLSEKFFKAASNCGIVESILNWVKFKAQTQLNKKCSSVKYSKIKGIPKLDDANDAGGKHSLECTLILTEGDSAKSLAVSGLGVIGRDRYGVFPLRGKILNVREASHKQIMENAEINNIIKIVGLQYKKSYDDAESLKTLRYGKIMIMTDQDQDGSHIKGLLINFIHHNWPSLLKHGFLEEFITPIVKASKNKQELSFYSIPEFDEWKKHIENQKAWKIKYYKGLGTSTAKEAKEYFADMERHRILFRYAGPEDDAAITLAFSKKKIDDRKEWLTNFMEDRRQRRLHGLPEQFLYGTATKHLTYNDFINKELILFSNSDNERSIPSLVDGFKPGQRKVLFTCFKRNDKREVKVAQLAGSVAEMSAYHHGEQALMMTIVNLAQNFVGSNNINLLQPIGQFGTRLHGGKDAASPRYIFTMLSSLARLLFPAVDDNLLKFLYDDNQRVEPEWYIPIIPMVLINGAEGIGTGWACKLPNYDAREIVNNVRRMLEGLDPHPMLPNYKNFKGTIQELGQNQYAVSGEIFVVDRNTVEITELPVRTWTQVYKEQVLEPMLNGTDKTPALISDYKEYHTDTTVKFVVKMTEEKLAQAEAAGLHKVFKLQTTLTCNSMVLFDHMGCLKKYETVQDILKEFFDLRLSYYGLRKEWLVGMLGAESTKLNNQARFILEKIQGKITIENRSKKDLIQMLVQRGYESDPVKAWKEAQEKAAEEEDSQNQHDDSSSDSGTPSGPDFNYILNMSLWSLTKEKVEELIKQRDTKGREVNDLKRKSPSDLWKEDLAAFVEELDKVEAQEREDILAGMSGKAIKGKVGKPKVKKLQLEETMPSPYGRRIVPEITAMKADASRKLLKKKKGDPDTTVVKVEFDEEFSGTPAEGTGEETLTPSAPVNKGPKPKREKKEPGTRVRKTPTSTGKTNAKKVKKRNPWSDDESKSESDLEEAEPVVIPRDSLLRRAAAERPKYTFDFSEEEDDDAAAADDSNDLEELKVKASPITNDGEDEFVPSDGLDKDEYAFSSGKSKATPEKSSNDKKSQDFGNLFSFPSYSQKSEDDSAKFDSNEEDTASVFAPSFGLKQTDKLPSKTVAAKKGKPPSDTAPKAKRAPKQKKIVETINSDSDSEFGIPKKTTTPKGKGRGAKKRKASGSENEGDYNPGRKPSKTASKKPKKTSFDQDSDVDIFPSDFTSEPPALPRTGRARKEVKYFAESDEEEDVDFAMFN.

Ala-2 bears the N-acetylalanine mark. Lys-3 carries the post-translational modification N6-acetyllysine. Residues Lys-21 and Lys-22 each participate in a glycyl lysine isopeptide (Lys-Gly) (interchain with G-Cter in SUMO2) cross-link. Residues Asn-100, Asn-129, and 157–159 (SSN) each bind ATP. Glycyl lysine isopeptide (Lys-Gly) (interchain with G-Cter in SUMO2) cross-links involve residues Lys-165 and Lys-166. ATP is bound at residue 170–177 (GRNGYGAK). Residues Lys-216 and Lys-287 each participate in a glycyl lysine isopeptide (Lys-Gly) (interchain with G-Cter in SUMO2) cross-link. Positions 351–353 (KKK) are interaction with DNA. Residues Lys-355 and Lys-361 each participate in a glycyl lysine isopeptide (Lys-Gly) (interchain with G-Cter in SUMO2) cross-link. 385 to 387 (QTK) provides a ligand contact to ATP. Glycyl lysine isopeptide (Lys-Gly) (interchain with G-Cter in SUMO2) cross-links involve residues Lys-425, Lys-427, and Lys-434. Positions 464-581 (CTLILTEGDS…SLLKHGFLEE (118 aa)) constitute a Toprim domain. Mg(2+)-binding residues include Glu-470, Asp-550, and Asp-552. Residues Lys-588, Lys-593, Lys-623, Lys-631, Lys-634, Lys-664, and Lys-700 each participate in a glycyl lysine isopeptide (Lys-Gly) (interchain with G-Cter in SUMO2) cross-link. Residues 724–1177 (IPSLVDGFKP…SPSDLWKEDL (454 aa)) enclose the Topo IIA-type catalytic domain. Tyr-814 functions as the O-(5'-phospho-DNA)-tyrosine intermediate in the catalytic mechanism. The interval 999–1008 (KLQTTLTCNS) is interaction with DNA. Residue Lys-1080 forms a Glycyl lysine isopeptide (Lys-Gly) (interchain with G-Cter in SUMO2) linkage. Residues 1098-1128 (AWKEAQEKAAEEEDSQNQHDDSSSDSGTPSG) are disordered. Residues Lys-1202, Lys-1205, Lys-1214, and Lys-1215 each participate in a glycyl lysine isopeptide (Lys-Gly) (interchain with G-Cter in SUMO2) cross-link. Ser-1224 is modified (phosphoserine). Glycyl lysine isopeptide (Lys-Gly) (interchain with G-Cter in SUMO2) cross-links involve residues Lys-1238, Lys-1250, and Lys-1259. Residues 1245 to 1586 (LLKKKKGDPD…FTSEPPALPR (342 aa)) form a disordered region. At Thr-1280 the chain carries Phosphothreonine. Glycyl lysine isopeptide (Lys-Gly) (interchain with G-Cter in SUMO2) cross-links involve residues Lys-1311 and Lys-1315. 2 stretches are compositionally biased toward basic and acidic residues: residues 1322–1332 (PWSDDESKSES) and 1346–1358 (SLLR…RPKY). Ser-1324, Ser-1328, Ser-1330, Ser-1332, and Ser-1346 each carry phosphoserine. Residue Tyr-1358 is modified to Phosphotyrosine. Positions 1362 to 1379 (FSEEEDDDAAAADDSNDL) are enriched in acidic residues. Phosphoserine is present on residues Ser-1363 and Ser-1376. Lys-1385 is covalently cross-linked (Glycyl lysine isopeptide (Lys-Gly) (interchain with G-Cter in SUMO2)). Ser-1387 is subject to Phosphoserine. Thr-1390 is subject to Phosphothreonine. Position 1400 is a phosphoserine (Ser-1400). The residue at position 1408 (Tyr-1408) is a Phosphotyrosine. Phosphoserine is present on Ser-1411. The span at 1417-1429 (ATPEKSSNDKKSQ) shows a compositional bias: basic and acidic residues. Lys-1427 participates in a covalent cross-link: Glycyl lysine isopeptide (Lys-Gly) (interchain with G-Cter in SUMO2). Phosphoserine occurs at positions 1428, 1439, and 1441. Lys-1443 is covalently cross-linked (Glycyl lysine isopeptide (Lys-Gly) (interchain with G-Cter in SUMO2)). A compositionally biased stretch (basic and acidic residues) spans 1443–1453 (KSEDDSAKFDS). Phosphoserine occurs at positions 1448, 1453, and 1460. Residue Lys-1477 forms a Glycyl lysine isopeptide (Lys-Gly) (interchain with G-Cter in SUMO2) linkage. The interaction with PLSCR1 stretch occupies residues 1493 to 1499 (KAKRAPK). Phosphoserine is present on residues Ser-1509, Ser-1511, and Ser-1513. Residues 1526–1536 (GKGRGAKKRKA) show a composition bias toward basic residues. Phosphoserine occurs at positions 1537 and 1539. The segment covering 1550–1561 (KPSKTASKKPKK) has biased composition (basic residues). Thr-1562 is modified (phosphothreonine). Ser-1563 and Ser-1568 each carry phosphoserine. Tyr-1596 bears the Phosphotyrosine mark. Phosphoserine is present on Ser-1600.

Belongs to the type II topoisomerase family. As to quaternary structure, homodimer. Interacts with KIAA1210. Interacts with PLSCR1. The cofactor is Mg(2+). It depends on Mn(2+) as a cofactor. Ca(2+) is required as a cofactor.

The protein localises to the nucleus. Its subcellular location is the nucleolus. The protein resides in the nucleoplasm. It catalyses the reaction ATP-dependent breakage, passage and rejoining of double-stranded DNA.. Its function is as follows. Key decatenating enzyme that alters DNA topology by binding to two double-stranded DNA molecules, generating a double-stranded break in one of the strands, passing the intact strand through the broken strand, and religating the broken strand. Plays a role in B-cell differentiation. This chain is DNA topoisomerase 2-beta (Top2b), found in Mus musculus (Mouse).